A 138-amino-acid chain; its full sequence is MMVTRKHYRYIYLQNSHSLISCFVHFEFPRVWYGAICPCFPSFALLRKIFFCQQQQHATLCAVLRSGLCGNGDIVPMPARREVWVWGVCDLVAMAIARGCGLSPNGCPLLRISHSCRVNKKHERGRTALNSGRSRDVK.

This is an uncharacterized protein from Saccharomyces cerevisiae (strain ATCC 204508 / S288c) (Baker's yeast).